We begin with the raw amino-acid sequence, 549 residues long: Glucose-6-phosphate isomerase (549 aa).

Residue Glu-355 is the Proton donor of the active site. Catalysis depends on residues His-386 and Lys-514.

This sequence belongs to the GPI family.

It is found in the cytoplasm. The enzyme catalyses alpha-D-glucose 6-phosphate = beta-D-fructose 6-phosphate. The protein operates within carbohydrate biosynthesis; gluconeogenesis. It functions in the pathway carbohydrate degradation; glycolysis; D-glyceraldehyde 3-phosphate and glycerone phosphate from D-glucose: step 2/4. In terms of biological role, catalyzes the reversible isomerization of glucose-6-phosphate to fructose-6-phosphate. The protein is Glucose-6-phosphate isomerase of Aeromonas salmonicida (strain A449).